Reading from the N-terminus, the 355-residue chain is Peptide chain release factor 1 (355 aa).

Glutamine 231 is subject to N5-methylglutamine. The span at 280–291 (SERLAKESEARK) shows a compositional bias: basic and acidic residues. Residues 280–303 (SERLAKESEARKSQVGSGDRSERI) are disordered.

This sequence belongs to the prokaryotic/mitochondrial release factor family. Post-translationally, methylated by PrmC. Methylation increases the termination efficiency of RF1.

Its subcellular location is the cytoplasm. In terms of biological role, peptide chain release factor 1 directs the termination of translation in response to the peptide chain termination codons UAG and UAA. This Campylobacter jejuni subsp. jejuni serotype O:6 (strain 81116 / NCTC 11828) protein is Peptide chain release factor 1.